We begin with the raw amino-acid sequence, 602 residues long: Aspartate--tRNA(Asp/Asn) ligase (602 aa).

Glu170 lines the L-aspartate pocket. Positions 194-197 (QLFK) are aspartate. Arg216 contributes to the L-aspartate binding site. ATP contacts are provided by residues 216-218 (RDE) and Gln225. His448 lines the L-aspartate pocket. Glu482 is a binding site for ATP. Arg489 contributes to the L-aspartate binding site. An ATP-binding site is contributed by 534-537 (GWDR). A disordered region spans residues 559-602 (GGVDPLTNAPAPITAQQRKESGVDAKPEPKGDAASAKPDAPADK). Over residues 575–589 (QRKESGVDAKPEPKG) the composition is skewed to basic and acidic residues. Low complexity predominate over residues 590 to 602 (DAASAKPDAPADK).

Belongs to the class-II aminoacyl-tRNA synthetase family. Type 1 subfamily. As to quaternary structure, homodimer.

It localises to the cytoplasm. The catalysed reaction is tRNA(Asx) + L-aspartate + ATP = L-aspartyl-tRNA(Asx) + AMP + diphosphate. Functionally, aspartyl-tRNA synthetase with relaxed tRNA specificity since it is able to aspartylate not only its cognate tRNA(Asp) but also tRNA(Asn). Reaction proceeds in two steps: L-aspartate is first activated by ATP to form Asp-AMP and then transferred to the acceptor end of tRNA(Asp/Asn). In Rhodococcus jostii (strain RHA1), this protein is Aspartate--tRNA(Asp/Asn) ligase.